Here is a 573-residue protein sequence, read N- to C-terminus: MLFNDFCKILDKIEKTTKRLEKTDYFVELIDFIKTNGKPENLKQVSQITIGRVFAEFENKEIGIGPNLLLEAVKTTGISEKDLKAEIKKTGDIGTAVENLSSNIKQVSLFSQPLTLEEMYSTLKKLSEIEGNSSQKKKIRIISNLLILANPVESRYISRLILEDMRIGMNIPTILASFSNYFNVNKENVEKIYAVTNDIGLLGEKLISGSDIENDSELHLKVFRPIKPMLAQLTPSIEDAIIETKIPQFETKYDGARVQVHKSNGEVKIYSRRLEDITNSVPELVEEIKKIDIDNIILEGECVAMDLSSGKPRPFQDILRRFRRKYDINKMAEKIALRIYFFDVLYYNRGLIDTPLRNRREILEKLFGTNDWDTELEKIEKEILSKKMLFSSFKLNSDDPNLAKEFFNWSLSIGHEGVMIKNPDAPYTPGSRVKTMYKVKPTLENLDVVVTRAKIGMGKRKDWYGSYEISVKDDESNLHVIGNVGSGLTEDDLERLTKIVNEIKIEDLGEEVILEPKIVLEVTYEEIQTSEKYEMGYALRFPRVVQIREDKSINDINTLDDVKKIYDIERNRK.

Glutamate 250 is an ATP binding site. The active-site N6-AMP-lysine intermediate is the lysine 252. ATP contacts are provided by arginine 257, arginine 272, glutamate 301, phenylalanine 342, arginine 432, and lysine 438.

This sequence belongs to the ATP-dependent DNA ligase family. It depends on Mg(2+) as a cofactor.

It catalyses the reaction ATP + (deoxyribonucleotide)n-3'-hydroxyl + 5'-phospho-(deoxyribonucleotide)m = (deoxyribonucleotide)n+m + AMP + diphosphate.. Its function is as follows. DNA ligase that seals nicks in double-stranded DNA during DNA replication, DNA recombination and DNA repair. The polypeptide is DNA ligase (Methanococcus maripaludis (strain C5 / ATCC BAA-1333)).